Reading from the N-terminus, the 880-residue chain is DNA-directed RNA polymerase subunit Rpo1N (880 aa).

Residues Cys-58, Cys-61, Cys-68, and His-71 each contribute to the Zn(2+) site. DsDNA is bound by residues Lys-88 and Glu-92–Lys-95. Zn(2+) is bound by residues Cys-98 and Cys-101. Lys-138 is a dsDNA binding site. Residues Cys-146 and Cys-149 each contribute to the Zn(2+) site. DsDNA-binding positions include Lys-303, Lys-305 to Arg-310, Arg-323, and Gln-422. Asp-456, Asp-458, and Asp-460 together coordinate Mg(2+). Arg-573, Cys-575, Cys-580, and His-582 together coordinate Zn(2+). DsDNA contacts are provided by residues Arg-812–Arg-822 and Gln-815.

Belongs to the RNA polymerase beta' chain family. In terms of assembly, part of the 13-subunit RNA polymerase complex. Rpo1N and Rpo5 form a cleft which docks Rpo13. Interacts with Rpo8 on the periphery of the clamp head. Requires Mg(2+) as cofactor. Zn(2+) serves as cofactor.

It is found in the cytoplasm. The catalysed reaction is RNA(n) + a ribonucleoside 5'-triphosphate = RNA(n+1) + diphosphate. In terms of biological role, DNA-dependent RNA polymerase (RNAP) catalyzes the transcription of DNA into RNA using the four ribonucleoside triphosphates as substrates. Forms the clamp head domain. The chain is DNA-directed RNA polymerase subunit Rpo1N from Saccharolobus shibatae (strain ATCC 51178 / DSM 5389 / JCM 8931 / NBRC 15437 / B12) (Sulfolobus shibatae).